We begin with the raw amino-acid sequence, 400 residues long: Nicotinate phosphoribosyltransferase (400 aa).

His220 carries the phosphohistidine; by autocatalysis modification.

This sequence belongs to the NAPRTase family. Post-translationally, transiently phosphorylated on a His residue during the reaction cycle. Phosphorylation strongly increases the affinity for substrates and increases the rate of nicotinate D-ribonucleotide production. Dephosphorylation regenerates the low-affinity form of the enzyme, leading to product release.

The enzyme catalyses nicotinate + 5-phospho-alpha-D-ribose 1-diphosphate + ATP + H2O = nicotinate beta-D-ribonucleotide + ADP + phosphate + diphosphate. It functions in the pathway cofactor biosynthesis; NAD(+) biosynthesis; nicotinate D-ribonucleotide from nicotinate: step 1/1. Catalyzes the synthesis of beta-nicotinate D-ribonucleotide from nicotinate and 5-phospho-D-ribose 1-phosphate at the expense of ATP. In Shigella sonnei (strain Ss046), this protein is Nicotinate phosphoribosyltransferase.